The primary structure comprises 266 residues: Glucosamine-6-phosphate deaminase (266 aa).

The Proton acceptor; for enolization step role is filled by Asp72. Asp141 functions as the For ring-opening step in the catalytic mechanism. His143 serves as the catalytic Proton acceptor; for ring-opening step. The For ring-opening step role is filled by Glu148.

Belongs to the glucosamine/galactosamine-6-phosphate isomerase family. NagB subfamily. In terms of assembly, homohexamer.

The catalysed reaction is alpha-D-glucosamine 6-phosphate + H2O = beta-D-fructose 6-phosphate + NH4(+). Its pathway is amino-sugar metabolism; N-acetylneuraminate degradation; D-fructose 6-phosphate from N-acetylneuraminate: step 5/5. With respect to regulation, allosterically activated by N-acetylglucosamine 6-phosphate (GlcNAc6P). In terms of biological role, catalyzes the reversible isomerization-deamination of glucosamine 6-phosphate (GlcN6P) to form fructose 6-phosphate (Fru6P) and ammonium ion. The sequence is that of Glucosamine-6-phosphate deaminase from Vibrio cholerae serotype O1 (strain ATCC 39541 / Classical Ogawa 395 / O395).